Consider the following 215-residue polypeptide: MSQEDSTSAAAAQQPTSRPAPKLNERILSSLSRRGGGAHPWHDLEIGPGAPAVFNVVVEITKGSKVKYELDKKTGLIKVDRVLYSSVVYPHNYGFIPRTLCEDNDPMDVLVLMQEPVIPGSFLRARAIGLMPMIDQGEKDDKIIAVCADDPEYRHYSTSVSLLPRLQEIKRLEDYKKNENKEVAVDAFLPATTAREAIQYSMDLYAQYILQSLRQ.

A compositionally biased stretch (low complexity) spans 1-21 (MSQEDSTSAAAAQQPTSRPAP). Positions 1-24 (MSQEDSTSAAAAQQPTSRPAPKLN) are disordered. Residues Asp103, Asp108, and Asp140 each coordinate Mg(2+).

It belongs to the PPase family. Mg(2+) is required as a cofactor. As to expression, expressed in metabolically active tissue such as root, shoot, embryo and aleurone.

The protein localises to the cytoplasm. It catalyses the reaction diphosphate + H2O = 2 phosphate + H(+). Its function is as follows. May play a role in germination. The chain is Soluble inorganic pyrophosphatase (IPP) from Hordeum vulgare subsp. vulgare (Domesticated barley).